Here is a 447-residue protein sequence, read N- to C-terminus: Phosphoglucosamine mutase (447 aa).

Serine 100 functions as the Phosphoserine intermediate in the catalytic mechanism. The Mg(2+) site is built by serine 100, aspartate 240, aspartate 242, and aspartate 244. A Phosphoserine modification is found at serine 100.

It belongs to the phosphohexose mutase family. The cofactor is Mg(2+). Post-translationally, activated by phosphorylation.

It catalyses the reaction alpha-D-glucosamine 1-phosphate = D-glucosamine 6-phosphate. In terms of biological role, catalyzes the conversion of glucosamine-6-phosphate to glucosamine-1-phosphate. This chain is Phosphoglucosamine mutase, found in Anoxybacillus flavithermus (strain DSM 21510 / WK1).